The primary structure comprises 273 residues: Tyrosinase (273 aa).

His-38, His-54, His-63, His-190, His-194, and His-216 together coordinate Cu cation.

Belongs to the tyrosinase family. Cu(2+) is required as a cofactor.

It catalyses the reaction 2 L-dopa + O2 = 2 L-dopaquinone + 2 H2O. It carries out the reaction L-tyrosine + O2 = L-dopaquinone + H2O. Its function is as follows. This is a copper-containing oxidase that functions in the formation of pigments such as melanins and other polyphenolic compounds. This is Tyrosinase (melC2) from Streptomyces antibioticus.